The following is a 117-amino-acid chain: Large ribosomal subunit protein bL19 (117 aa).

The protein belongs to the bacterial ribosomal protein bL19 family.

In terms of biological role, this protein is located at the 30S-50S ribosomal subunit interface and may play a role in the structure and function of the aminoacyl-tRNA binding site. This is Large ribosomal subunit protein bL19 from Shewanella piezotolerans (strain WP3 / JCM 13877).